A 588-amino-acid chain; its full sequence is Adenine deaminase (588 aa).

Belongs to the metallo-dependent hydrolases superfamily. Adenine deaminase family. In terms of assembly, homodimer. Requires Mn(2+) as cofactor.

It carries out the reaction adenine + H2O + H(+) = hypoxanthine + NH4(+). This chain is Adenine deaminase, found in Shigella boydii serotype 4 (strain Sb227).